We begin with the raw amino-acid sequence, 302 residues long: Recombination-associated protein RdgC (302 aa).

The protein belongs to the RdgC family.

It localises to the cytoplasm. The protein resides in the nucleoid. Functionally, may be involved in recombination. The polypeptide is Recombination-associated protein RdgC (Xylella fastidiosa (strain M23)).